A 264-amino-acid polypeptide reads, in one-letter code: uncharacterized protein (264 aa).

Position 15–22 (15–22 (KGGTGKTT)) interacts with ATP.

It belongs to the ParA family. MinD subfamily.

This is an uncharacterized protein from Methanocaldococcus jannaschii (strain ATCC 43067 / DSM 2661 / JAL-1 / JCM 10045 / NBRC 100440) (Methanococcus jannaschii).